We begin with the raw amino-acid sequence, 418 residues long: L-rhamnose isomerase (418 aa).

His-262, Asp-294, and Asp-296 together coordinate Mn(2+).

The protein belongs to the rhamnose isomerase family. In terms of assembly, homotetramer. It depends on Mn(2+) as a cofactor.

The protein resides in the cytoplasm. The catalysed reaction is L-rhamnopyranose = L-rhamnulose. It functions in the pathway carbohydrate degradation; L-rhamnose degradation; glycerone phosphate from L-rhamnose: step 1/3. Catalyzes the interconversion of L-rhamnose and L-rhamnulose. The polypeptide is L-rhamnose isomerase (Yersinia pseudotuberculosis serotype O:1b (strain IP 31758)).